Consider the following 144-residue polypeptide: Grifin (144 aa).

Residues Ser5 to Ala133 enclose the Galectin domain. Ser138 carries the post-translational modification Phosphoserine.

As to quaternary structure, homodimer. In terms of tissue distribution, not detected in lens.

The chain is Grifin (GRIFIN) from Homo sapiens (Human).